A 467-amino-acid polypeptide reads, in one-letter code: Variant surface glycoprotein 7 (467 aa).

The segment covering 77 to 87 (TIAAGATNTKL) has biased composition (polar residues). The disordered stretch occupies residues 77-133 (TIAAGATNTKLSGHHPNQGRRGRRRSSSARPNNSKGNSPSKRAGGAVRGETPASGRL). The span at 93-103 (NQGRRGRRRSS) shows a compositional bias: basic residues. Polar residues predominate over residues 107–116 (PNNSKGNSPS). 2 N-linked (GlcNAc...) asparagine glycosylation sites follow: Asn-108 and Asn-252. A disordered region spans residues 382–407 (AEKVENPRSQGNPETAENKKEGGNTA). Residue Asn-416 is glycosylated (N-linked (GlcNAc...) asparagine). Asp-444 is lipidated: GPI-anchor amidated aspartate. A propeptide spans 445–467 (SSFLLSKQFALSVVSAAFAALLF) (removed in mature form).

It localises to the cell membrane. Functionally, VSG forms a coat on the surface of the parasite. The trypanosome evades the immune response of the host by expressing a series of antigenically distinct VSGs from an estimated 1000 VSG genes. This Trypanosoma brucei rhodesiense protein is Variant surface glycoprotein 7.